The chain runs to 325 residues: tRNA dimethylallyltransferase (325 aa).

12–19 (GPTASGKT) is a binding site for ATP. A substrate-binding site is contributed by 14 to 19 (TASGKT). Interaction with substrate tRNA regions lie at residues 37–40 (DSAL), 161–165 (QRIHR), and 244–249 (RCVGYR).

The protein belongs to the IPP transferase family. In terms of assembly, monomer. The cofactor is Mg(2+).

It catalyses the reaction adenosine(37) in tRNA + dimethylallyl diphosphate = N(6)-dimethylallyladenosine(37) in tRNA + diphosphate. Functionally, catalyzes the transfer of a dimethylallyl group onto the adenine at position 37 in tRNAs that read codons beginning with uridine, leading to the formation of N6-(dimethylallyl)adenosine (i(6)A). The chain is tRNA dimethylallyltransferase from Chromobacterium violaceum (strain ATCC 12472 / DSM 30191 / JCM 1249 / CCUG 213 / NBRC 12614 / NCIMB 9131 / NCTC 9757 / MK).